The sequence spans 317 residues: Transcriptional activator protein med (317 aa).

An N-terminal signal peptide occupies residues 1 to 17 (MITRLVMIFSVLLLLSG). Residue cysteine 18 is the site of N-palmitoyl cysteine attachment. The S-diacylglycerol cysteine moiety is linked to residue cysteine 18.

Belongs to the BMP lipoprotein family.

It localises to the cell membrane. Positive activator of the comK gene. This Bacillus subtilis (strain 168) protein is Transcriptional activator protein med (med).